The chain runs to 209 residues: Large ribosomal subunit protein uL3 (209 aa).

N5-methylglutamine is present on Gln-150.

It belongs to the universal ribosomal protein uL3 family. Part of the 50S ribosomal subunit. Forms a cluster with proteins L14 and L19. Methylated by PrmB.

In terms of biological role, one of the primary rRNA binding proteins, it binds directly near the 3'-end of the 23S rRNA, where it nucleates assembly of the 50S subunit. The sequence is that of Large ribosomal subunit protein uL3 from Klebsiella pneumoniae (strain 342).